A 739-amino-acid polypeptide reads, in one-letter code: Vascular cell adhesion protein 1 (739 aa).

A signal peptide spans 1 to 24; sequence MPGKMVVILGASNILWIMFAASQA. Ig-like C2-type domains are found at residues 25-105, 109-212, 223-309, 312-399, 408-506, 511-595, and 600-684; these read FKIE…RKLE, QVEI…TVRQ, PKNT…LIVQ, PFTV…IQVE, EIEM…QTLY, PRDT…VELI, and PKDI…LTLD. At 25–698 the chain is on the extracellular side; it reads FKIETTPESR…ENNKDYFSPE (674 aa). 5 cysteine pairs are disulfide-bonded: Cys47/Cys95, Cys52/Cys99, Cys137/Cys195, Cys246/Cys291, and Cys335/Cys383. 6 N-linked (GlcNAc...) asparagine glycosylation sites follow: Asn273, Asn365, Asn417, Asn463, Asn531, and Asn561. Cys534 and Cys579 are disulfide-bonded. A helical membrane pass occupies residues 699-720; it reads LLVLYFASSLIIPAIGMIIYFA. Residues 721 to 739 are Cytoplasmic-facing; it reads RKANMKGSYSLVEAQKSKV.

In terms of processing, cleaved by the metalloproteinase ADAM17 to generate the soluble form. Post-translationally, sialoglycoprotein. Ubiquitinated by TRIM65 via 'Lys-48'-linked ubiquitination; leading to proteasomal degradation. Expressed on inflamed vascular endothelium, as well as on macrophage-like and dendritic cell types in both normal and inflamed tissue.

The protein resides in the cell membrane. It localises to the secreted. Functionally, cell adhesion glycoprotein predominantly expressed on the surface of endothelial cells that plays an important role in immune surveillance and inflammation. Acts as a major regulator of leukocyte adhesion to the endothelium through interaction with different types of integrins. During inflammatory responses, binds ligands on the surface of activated endothelial cells to initiate the activation of calcium channels and the plasma membrane-associated small GTPase RAC1 leading to leukocyte transendothelial migration. Also serves as a quality-control checkpoint for entry into bone marrow by providing a 'don't-eat-me' stamping in the context of major histocompatibility complex (MHC) class-I presentation. This Homo sapiens (Human) protein is Vascular cell adhesion protein 1 (VCAM1).